A 505-amino-acid chain; its full sequence is L-carnitine/gamma-butyrobetaine antiporter (505 aa).

The next 12 membrane-spanning stretches (helical) occupy residues 10–30, 50–70, 92–112, 143–163, 195–215, 231–251, 263–283, 316–336, 347–367, 403–423, 446–466, and 475–495; these read IEPKVFFPPLIIVGILCWLTV, IWGWAFEWYMVVMLFGWFWLV, IFMMFASCTSAAVLFWGSIEI, GPLPWATYSFLSVAFAYFFFV, FYLVALIFAMGTSLGLATPLV, LDAIIITCWIVLNAICVACGL, SYLSFLMLGWVFIVSGASFIM, WTVFYWAWWVIYAIQMSIFLA, LCFGMVLGLTASTWILWTVLG, FSTATMWGFFILCFIATVTLI, LLVRIGWSVLVGVIGIVLLAL, and AIIAGGCPLFFVNIMVTLSFI.

This sequence belongs to the BCCT transporter (TC 2.A.15) family. CaiT subfamily. As to quaternary structure, homotrimer.

The protein localises to the cell inner membrane. The enzyme catalyses 4-(trimethylamino)butanoate(in) + (R)-carnitine(out) = 4-(trimethylamino)butanoate(out) + (R)-carnitine(in). It participates in amine and polyamine metabolism; carnitine metabolism. Functionally, catalyzes the exchange of L-carnitine for gamma-butyrobetaine. The sequence is that of L-carnitine/gamma-butyrobetaine antiporter from Citrobacter koseri (strain ATCC BAA-895 / CDC 4225-83 / SGSC4696).